Reading from the N-terminus, the 399-residue chain is 4-hydroxy-3-methylbut-2-enyl diphosphate reductase (399 aa).

Cys-66 contacts [4Fe-4S] cluster. Position 96 (His-96) interacts with (2E)-4-hydroxy-3-methylbut-2-enyl diphosphate. Position 96 (His-96) interacts with dimethylallyl diphosphate. His-96 serves as a coordination point for isopentenyl diphosphate. Residue Cys-157 participates in [4Fe-4S] cluster binding. (2E)-4-hydroxy-3-methylbut-2-enyl diphosphate is bound at residue His-185. A dimethylallyl diphosphate-binding site is contributed by His-185. His-185 contacts isopentenyl diphosphate. Residue Glu-187 is the Proton donor of the active site. Thr-250 is a binding site for (2E)-4-hydroxy-3-methylbut-2-enyl diphosphate. [4Fe-4S] cluster is bound at residue Cys-288. (2E)-4-hydroxy-3-methylbut-2-enyl diphosphate-binding residues include Ser-317, Ser-318, Asn-319, and Ser-380. The dimethylallyl diphosphate site is built by Ser-317, Ser-318, Asn-319, and Ser-380. Isopentenyl diphosphate contacts are provided by Ser-317, Ser-318, Asn-319, and Ser-380.

This sequence belongs to the IspH family. Requires [4Fe-4S] cluster as cofactor.

The catalysed reaction is isopentenyl diphosphate + 2 oxidized [2Fe-2S]-[ferredoxin] + H2O = (2E)-4-hydroxy-3-methylbut-2-enyl diphosphate + 2 reduced [2Fe-2S]-[ferredoxin] + 2 H(+). It catalyses the reaction dimethylallyl diphosphate + 2 oxidized [2Fe-2S]-[ferredoxin] + H2O = (2E)-4-hydroxy-3-methylbut-2-enyl diphosphate + 2 reduced [2Fe-2S]-[ferredoxin] + 2 H(+). It functions in the pathway isoprenoid biosynthesis; dimethylallyl diphosphate biosynthesis; dimethylallyl diphosphate from (2E)-4-hydroxy-3-methylbutenyl diphosphate: step 1/1. The protein operates within isoprenoid biosynthesis; isopentenyl diphosphate biosynthesis via DXP pathway; isopentenyl diphosphate from 1-deoxy-D-xylulose 5-phosphate: step 6/6. Functionally, catalyzes the conversion of 1-hydroxy-2-methyl-2-(E)-butenyl 4-diphosphate (HMBPP) into a mixture of isopentenyl diphosphate (IPP) and dimethylallyl diphosphate (DMAPP). Acts in the terminal step of the DOXP/MEP pathway for isoprenoid precursor biosynthesis. This is 4-hydroxy-3-methylbut-2-enyl diphosphate reductase from Synechococcus sp. (strain CC9902).